The chain runs to 222 residues: 7-carboxy-7-deazaguanine synthase (222 aa).

Substrate-binding positions include 16–18 (LQG) and Arg-31. The region spanning 22–222 (NLGRPAVFVR…IMAWGNARGK (201 aa)) is the Radical SAM core domain. Cys-35, Cys-39, and Cys-42 together coordinate [4Fe-4S] cluster. Position 44 (Thr-44) interacts with Mg(2+). Position 77 (Thr-77) interacts with substrate. Residues Gly-79 and 126–128 (SPK) each bind S-adenosyl-L-methionine.

The protein belongs to the radical SAM superfamily. 7-carboxy-7-deazaguanine synthase family. As to quaternary structure, homodimer. [4Fe-4S] cluster serves as cofactor. It depends on S-adenosyl-L-methionine as a cofactor. Mg(2+) is required as a cofactor.

The enzyme catalyses 6-carboxy-5,6,7,8-tetrahydropterin + H(+) = 7-carboxy-7-deazaguanine + NH4(+). It functions in the pathway purine metabolism; 7-cyano-7-deazaguanine biosynthesis. Functionally, catalyzes the complex heterocyclic radical-mediated conversion of 6-carboxy-5,6,7,8-tetrahydropterin (CPH4) to 7-carboxy-7-deazaguanine (CDG), a step common to the biosynthetic pathways of all 7-deazapurine-containing compounds. This is 7-carboxy-7-deazaguanine synthase from Pyrobaculum aerophilum (strain ATCC 51768 / DSM 7523 / JCM 9630 / CIP 104966 / NBRC 100827 / IM2).